The following is a 668-amino-acid chain: CLK4-associating serine/arginine rich protein (668 aa).

Ser-101 carries the phosphoserine modification. 2 disordered regions span residues 173-232 (AEVE…GMAD) and 252-668 (AKAL…HYRH). Positions 182–214 (PEEEESPAEEESNSDEDEVIPDIDVEVDVDELN) are enriched in acidic residues. A compositionally biased stretch (basic residues) spans 265–283 (RRSRRQRREFREKRLRGRK). Ser-285 and Ser-294 each carry phosphoserine. The span at 290–313 (ARRDSPTYDPYKRSPSESSSESRS) shows a compositional bias: basic and acidic residues. A Phosphothreonine modification is found at Thr-327. Ser-331 and Ser-335 each carry phosphoserine. Residues 340–353 (AAAAAAAAASGAAP) show a composition bias toward low complexity. Positions 354 to 365 (GKPPAPPQPGGP) are enriched in pro residues. A compositionally biased stretch (low complexity) spans 378 to 395 (SSSSASRTSSSRSSSRSS). Residues 396 to 435 (SRSRRGYYRSGRHARSRSRSWSRSRSRSRRYSRSRSRGRR) show a composition bias toward basic residues. Basic and acidic residues predominate over residues 436–446 (HSDGGSRDGHR). Basic residues predominate over residues 475–486 (RGARGPRHHSSS). 2 stretches are compositionally biased toward low complexity: residues 487–510 (HSRS…SRSQ) and 518–527 (QSHSQSQSHS). Phosphoserine is present on Ser-541. Thr-567 is modified (phosphothreonine). Residues 579-641 (ALNRQFKADK…ERQYSRQSRS (63 aa)) adopt a coiled-coil conformation. Composition is skewed to basic and acidic residues over residues 584-611 (FKAD…ELRA) and 619-635 (KERE…ERQY). The span at 636 to 645 (SRQSRSPSPR) shows a compositional bias: low complexity. The span at 653–668 (SRRRSRSRSRSPHYRH) shows a compositional bias: basic residues.

Belongs to the splicing factor SR family. In terms of assembly, probably interacts with CLK4. Post-translationally, phosphorylated in vitro by CLK4.

The protein resides in the nucleus. Its function is as follows. Probably functions as an alternative splicing regulator. May regulate the mRNA splicing of genes such as CLK1. May act by regulating members of the CLK kinase family. The sequence is that of CLK4-associating serine/arginine rich protein (Clasrp) from Rattus norvegicus (Rat).